The primary structure comprises 1189 residues: Pyruvate carboxylase (1189 aa).

The Biotin carboxylation domain maps to Thr21–Glu473. Lys139, Glu223, and His258 together coordinate ATP. In terms of domain architecture, ATP-grasp spans Arg143–Ala340. Arg315 is a catalytic residue. The Pyruvate carboxyltransferase domain maps to Leu559–Arg826. Substrate is bound by residues Arg567–Gln571 and Arg640. Residue Asp568 participates in a divalent metal cation binding. Lys736, His766, and His768 together coordinate a divalent metal cation. Lys736 carries the N6-carboxylysine modification. Thr900 contacts substrate. The 76-residue stretch at Lys1099–Ser1174 folds into the Biotinyl-binding domain. An N6-biotinyllysine modification is found at Lys1140.

The cofactor is biotin. Zn(2+) serves as cofactor.

The protein localises to the cytoplasm. It carries out the reaction hydrogencarbonate + pyruvate + ATP = oxaloacetate + ADP + phosphate + H(+). It functions in the pathway carbohydrate biosynthesis; gluconeogenesis. Functionally, pyruvate carboxylase catalyzes a 2-step reaction, involving the ATP-dependent carboxylation of the covalently attached biotin in the first step and the transfer of the carboxyl group to pyruvate in the second. The protein is Pyruvate carboxylase (PYC1) of Komagataella pastoris (Yeast).